We begin with the raw amino-acid sequence, 177 residues long: Adenine phosphoribosyltransferase (177 aa).

It belongs to the purine/pyrimidine phosphoribosyltransferase family. Homodimer.

It is found in the cytoplasm. The catalysed reaction is AMP + diphosphate = 5-phospho-alpha-D-ribose 1-diphosphate + adenine. The protein operates within purine metabolism; AMP biosynthesis via salvage pathway; AMP from adenine: step 1/1. Functionally, catalyzes a salvage reaction resulting in the formation of AMP, that is energically less costly than de novo synthesis. This chain is Adenine phosphoribosyltransferase, found in Chlorobium phaeovibrioides (strain DSM 265 / 1930) (Prosthecochloris vibrioformis (strain DSM 265)).